The following is a 407-amino-acid chain: Transcriptional regulator UL34 (407 aa).

Residues A268 to F330 are disordered. Residues E273–D286 are compositionally biased toward acidic residues. Positions E287–K301 are enriched in basic and acidic residues. Basic residues predominate over residues P302–V312.

This sequence belongs to the HHV-5 UL34 protein family.

Its subcellular location is the host nucleus. Acts as a transcriptional repressor of the US3 gene expression through a specific DNA sequence named the transcriptional repressive element (tre). The polypeptide is Transcriptional regulator UL34 (UL34) (Homo sapiens (Human)).